Consider the following 237-residue polypeptide: Ribonuclease PH (237 aa).

Phosphate-binding positions include R86 and G124–R126.

Belongs to the RNase PH family. As to quaternary structure, homohexameric ring arranged as a trimer of dimers.

It catalyses the reaction tRNA(n+1) + phosphate = tRNA(n) + a ribonucleoside 5'-diphosphate. Phosphorolytic 3'-5' exoribonuclease that plays an important role in tRNA 3'-end maturation. Removes nucleotide residues following the 3'-CCA terminus of tRNAs; can also add nucleotides to the ends of RNA molecules by using nucleoside diphosphates as substrates, but this may not be physiologically important. Probably plays a role in initiation of 16S rRNA degradation (leading to ribosome degradation) during starvation. This chain is Ribonuclease PH, found in Methylocella silvestris (strain DSM 15510 / CIP 108128 / LMG 27833 / NCIMB 13906 / BL2).